Here is a 423-residue protein sequence, read N- to C-terminus: Glutamyl-tRNA reductase (423 aa).

Substrate-binding positions include 49–52 (TCNR), serine 111, 116–118 (EPQ), and glutamine 122. Residue cysteine 50 is the Nucleophile of the active site. Residue 191-196 (GAGEMS) participates in NADP(+) binding.

This sequence belongs to the glutamyl-tRNA reductase family. Homodimer.

It carries out the reaction (S)-4-amino-5-oxopentanoate + tRNA(Glu) + NADP(+) = L-glutamyl-tRNA(Glu) + NADPH + H(+). It participates in porphyrin-containing compound metabolism; protoporphyrin-IX biosynthesis; 5-aminolevulinate from L-glutamyl-tRNA(Glu): step 1/2. Its function is as follows. Catalyzes the NADPH-dependent reduction of glutamyl-tRNA(Glu) to glutamate 1-semialdehyde (GSA). In Syntrophus aciditrophicus (strain SB), this protein is Glutamyl-tRNA reductase.